Here is an 80-residue protein sequence, read N- to C-terminus: Conotoxin ArMKLT2-0321 (80 aa).

An N-terminal signal peptide occupies residues 1–21 (MKLTCVLIIAMLFLIVCQLNT). Residues 22–48 (ADDSTDKQEYRAVKLRDAMRNFKGSKR) constitute a propeptide that is removed on maturation. Cystine bridges form between Cys50–Cys63, Cys57–Cys68, and Cys62–Cys77.

Belongs to the conotoxin O1 superfamily. In terms of tissue distribution, expressed by the venom duct.

The protein resides in the secreted. In Conus arenatus (Sand-dusted cone), this protein is Conotoxin ArMKLT2-0321.